The sequence spans 459 residues: V-type ATP synthase beta chain (459 aa).

This sequence belongs to the ATPase alpha/beta chains family.

In terms of biological role, produces ATP from ADP in the presence of a proton gradient across the membrane. The V-type beta chain is a regulatory subunit. This chain is V-type ATP synthase beta chain, found in Thermoanaerobacter sp. (strain X514).